Consider the following 1207-residue polypeptide: Brassinosteroid LRR receptor kinase (1207 aa).

A signal peptide spans 1–34 (MKAHKTVFNQHPLSLNKLFFVLLLIFFLPPASPA). Positions 71–78 (CSFTGVSC) match the Cys pair 1 motif. LRR repeat units follow at residues 109–131 (NLES…AKSQ), 135–157 (TLDS…SSFG), 161–181 (NLKS…EMLK), 186–207 (SLQV…PWVS), 213–234 (ELEF…LDFK), 235–257 (NLSY…KDCS), 258–280 (NLQH…LSSC), 282–304 (KLSF…PSES), 305–325 (LQYL…QLAD), 329–350 (TVVE…SLGE), 353–374 (SLEL…DTLS), 378–400 (NIKT…FSNL), 402–423 (KLET…GICK), 428–450 (NLKV…LSNC), 452–474 (QLVS…LGSL), 476–499 (KLKD…MYLQ), 500–523 (ALEN…SNCT), 524–547 (KLNW…GRLS), 548–570 (NLAI…LGNC), and 572–594 (SLIW…LFKQ). N-linked (GlcNAc...) asparagine glycosylation occurs at Asn-119. Residues Asn-166 and Asn-196 are each glycosylated (N-linked (GlcNAc...) asparagine). N-linked (GlcNAc...) asparagine glycans are attached at residues Asn-235 and Asn-245. Asn-287 carries N-linked (GlcNAc...) asparagine glycosylation. Asn-339 and Asn-363 each carry an N-linked (GlcNAc...) asparagine glycan. 2 N-linked (GlcNAc...) asparagine glycosylation sites follow: Asn-412 and Asn-449. N-linked (GlcNAc...) asparagine glycosylation is present at Asn-521. N-linked (GlcNAc...) asparagine glycosylation is found at Asn-556, Asn-584, Asn-646, and Asn-662. LRR repeat units lie at residues 664-686 (SMIF…LGAM), 688-711 (YLSI…GGLK), 712-735 (NVAI…TSLT), and 736-758 (LLGE…APFD). 3 N-linked (GlcNAc...) asparagine glycosylation sites follow: Asn-724, Asn-746, and Asn-767. The Cys pair 2 motif lies at 771-779 (CGYPLPIPC). The helical transmembrane segment at 803–823 (SVAMGLLFSLFCIFGLIIVAI) threads the bilayer. Residues 888–1163 (FHNDSLVGSG…IQVMAMFKEI (276 aa)) enclose the Protein kinase domain. ATP-binding positions include 894–902 (VGSGGFGDV) and Lys-916. The active-site Proton acceptor is Asp-1014.

The protein belongs to the protein kinase superfamily. Ser/Thr protein kinase family.

It is found in the cell membrane. It carries out the reaction L-seryl-[protein] + ATP = O-phospho-L-seryl-[protein] + ADP + H(+). The enzyme catalyses L-threonyl-[protein] + ATP = O-phospho-L-threonyl-[protein] + ADP + H(+). Its function is as follows. Receptor with a serine/threonine-protein kinase activity. Regulates, in response to brassinosteroid binding, a signaling cascade involved in plant development, including expression of light- and stress-regulated genes, promotion of cell elongation, normal leaf and chloroplast senescence, and flowering. May be involved in a feedback regulation of brassinosteroid biosynthesis. May be also involved in the perception of systemin, a peptide hormone responsible for the systemic activation of defense genes in leaves of wounded plants. In Solanum lycopersicum (Tomato), this protein is Brassinosteroid LRR receptor kinase (CURL3).